The chain runs to 421 residues: Transcription factor rglT (421 aa).

The segment at 1-29 is disordered; it reads MQYEAYQWGQSHPTSTSGSMLQDTPTAAS. Positions 8 to 29 are enriched in polar residues; the sequence is WGQSHPTSTSGSMLQDTPTAAS. A DNA-binding region (zn(2)-C6 fungal-type) is located at residues 38–65; it reads CDECRKRKLKCSGEISGCSRCIKQSLSC. A compositionally biased stretch (basic and acidic residues) spans 346-357; the sequence is EARQRRWHESPD. Residues 346 to 371 are disordered; it reads EARQRRWHESPDSHPLPPDQRLNIPS.

Its subcellular location is the nucleus. In terms of biological role, transcription factor that is important for oxidative stress resistance and essential for gliotoxin (GT) self-protection through the regulation of a gene encoding a putative gliT homolog, even if E.nidulans does not produce gliotoxin itself. This is Transcription factor rglT from Emericella nidulans (strain FGSC A4 / ATCC 38163 / CBS 112.46 / NRRL 194 / M139) (Aspergillus nidulans).